Here is a 421-residue protein sequence, read N- to C-terminus: MSAHSMLCERIAIAKELIKRAESLSRSRKGGIEGGAKLCSKLKAELKFLQKVEAGKVAIKESHLQSTNLTHLRAIVESAENLEEVVSVLHVFGYTDTLGEKQTLVVDVVANGGHTWVKAIGRKAEALHNIWLGRGQYGDKSIIEQAEDFLQASHQQPVQYSNPHIIFAFYNSVSSPMAEKLKEMGISVRGDIVAVNALLDHPEELQPSESESDDEGPELLQVTRVDRENILASVAFPTEIKVDVCKRVNLDITTLITYVSALSYGGCHFIFKEKVLTEQAEQERKEQVLPQLEAFMKDKELFACESAVKDFQSILDTLGGPGERERATVLIKRINVVPDQPSERALRLVASSKINSRSLTIFGTGDTLKAITMTANSGFVRAANNQGVKFSVFIHQPRALTESKEALATPLPKDYTTDSEH.

Belongs to the UPF0415 family.

The polypeptide is UPF0415 protein C7orf25 (C7orf25) (Homo sapiens (Human)).